A 236-amino-acid polypeptide reads, in one-letter code: Phosphoribosylaminoimidazole-succinocarboxamide synthase (236 aa).

This sequence belongs to the SAICAR synthetase family.

It carries out the reaction 5-amino-1-(5-phospho-D-ribosyl)imidazole-4-carboxylate + L-aspartate + ATP = (2S)-2-[5-amino-1-(5-phospho-beta-D-ribosyl)imidazole-4-carboxamido]succinate + ADP + phosphate + 2 H(+). Its pathway is purine metabolism; IMP biosynthesis via de novo pathway; 5-amino-1-(5-phospho-D-ribosyl)imidazole-4-carboxamide from 5-amino-1-(5-phospho-D-ribosyl)imidazole-4-carboxylate: step 1/2. The chain is Phosphoribosylaminoimidazole-succinocarboxamide synthase from Pseudomonas paraeruginosa (strain DSM 24068 / PA7) (Pseudomonas aeruginosa (strain PA7)).